A 439-amino-acid polypeptide reads, in one-letter code: Mitochondrial distribution and morphology protein 12 (439 aa).

One can recognise an SMP-LTD domain in the interval 1–439; sequence MSIDVNWRSA…VYPSFWTFLI (439 aa). The segment covering 70–85 has biased composition (acidic residues); it reads YEEDDDDHTSDASEEL. Disordered stretches follow at residues 70 to 102, 184 to 274, and 353 to 386; these read YEED…ELNE, SGWS…PPRM, and GSEQ…RHGG. Basic and acidic residues predominate over residues 197 to 212; that stretch reads GRSERHAGMKHQRAEP. Residues 215-230 show a composition bias toward polar residues; that stretch reads DTSNSTSRPSTANTLP. Over residues 231-240 the composition is skewed to low complexity; it reads SHPSSSSKNS. Residues 247–261 show a composition bias toward basic and acidic residues; that stretch reads RNDHPSLHAGEHIED.

This sequence belongs to the MDM12 family. Component of the ER-mitochondria encounter structure (ERMES) or MDM complex, composed of mmm1, mdm10, mdm12 and mdm34. A mmm1 homodimer associates with one molecule of mdm12 on each side in a pairwise head-to-tail manner, and the SMP-LTD domains of mmm1 and mdm12 generate a continuous hydrophobic tunnel for phospholipid trafficking.

It is found in the mitochondrion outer membrane. It localises to the endoplasmic reticulum membrane. Component of the ERMES/MDM complex, which serves as a molecular tether to connect the endoplasmic reticulum (ER) and mitochondria. Components of this complex are involved in the control of mitochondrial shape and protein biogenesis, and function in nonvesicular lipid trafficking between the ER and mitochondria. Mdm12 is required for the interaction of the ER-resident membrane protein mmm1 and the outer mitochondrial membrane-resident beta-barrel protein mdm10. The mdm12-mmm1 subcomplex functions in the major beta-barrel assembly pathway that is responsible for biogenesis of all mitochondrial outer membrane beta-barrel proteins, and acts in a late step after the SAM complex. The mdm10-mdm12-mmm1 subcomplex further acts in the TOM40-specific pathway after the action of the mdm12-mmm1 complex. Essential for establishing and maintaining the structure of mitochondria and maintenance of mtDNA nucleoids. This chain is Mitochondrial distribution and morphology protein 12, found in Neosartorya fischeri (strain ATCC 1020 / DSM 3700 / CBS 544.65 / FGSC A1164 / JCM 1740 / NRRL 181 / WB 181) (Aspergillus fischerianus).